A 79-amino-acid chain; its full sequence is Acyl carrier protein (79 aa).

Residues 2–77 (SDVAERVKKI…DAIDFIKANA (76 aa)) enclose the Carrier domain. Residue Ser37 is modified to O-(pantetheine 4'-phosphoryl)serine.

Belongs to the acyl carrier protein (ACP) family. Post-translationally, 4'-phosphopantetheine is transferred from CoA to a specific serine of apo-ACP by AcpS. This modification is essential for activity because fatty acids are bound in thioester linkage to the sulfhydryl of the prosthetic group.

Its subcellular location is the cytoplasm. It functions in the pathway lipid metabolism; fatty acid biosynthesis. Its function is as follows. Carrier of the growing fatty acid chain in fatty acid biosynthesis. This is Acyl carrier protein from Azospirillum brasilense.